Reading from the N-terminus, the 225-residue chain is Leucyl/phenylalanyl-tRNA--protein transferase (225 aa).

The protein belongs to the L/F-transferase family.

It is found in the cytoplasm. The catalysed reaction is N-terminal L-lysyl-[protein] + L-leucyl-tRNA(Leu) = N-terminal L-leucyl-L-lysyl-[protein] + tRNA(Leu) + H(+). The enzyme catalyses N-terminal L-arginyl-[protein] + L-leucyl-tRNA(Leu) = N-terminal L-leucyl-L-arginyl-[protein] + tRNA(Leu) + H(+). It catalyses the reaction L-phenylalanyl-tRNA(Phe) + an N-terminal L-alpha-aminoacyl-[protein] = an N-terminal L-phenylalanyl-L-alpha-aminoacyl-[protein] + tRNA(Phe). Functions in the N-end rule pathway of protein degradation where it conjugates Leu, Phe and, less efficiently, Met from aminoacyl-tRNAs to the N-termini of proteins containing an N-terminal arginine or lysine. The chain is Leucyl/phenylalanyl-tRNA--protein transferase from Gluconobacter oxydans (strain 621H) (Gluconobacter suboxydans).